We begin with the raw amino-acid sequence, 320 residues long: Lipoyl synthase (320 aa).

[4Fe-4S] cluster is bound by residues C67, C72, C78, C93, C97, C100, and S307. The Radical SAM core domain occupies 79–296 (FNHGTATFMI…REKANEMGFE (218 aa)).

Belongs to the radical SAM superfamily. Lipoyl synthase family. [4Fe-4S] cluster is required as a cofactor.

Its subcellular location is the cytoplasm. The catalysed reaction is [[Fe-S] cluster scaffold protein carrying a second [4Fe-4S](2+) cluster] + N(6)-octanoyl-L-lysyl-[protein] + 2 oxidized [2Fe-2S]-[ferredoxin] + 2 S-adenosyl-L-methionine + 4 H(+) = [[Fe-S] cluster scaffold protein] + N(6)-[(R)-dihydrolipoyl]-L-lysyl-[protein] + 4 Fe(3+) + 2 hydrogen sulfide + 2 5'-deoxyadenosine + 2 L-methionine + 2 reduced [2Fe-2S]-[ferredoxin]. The protein operates within protein modification; protein lipoylation via endogenous pathway; protein N(6)-(lipoyl)lysine from octanoyl-[acyl-carrier-protein]: step 2/2. Functionally, catalyzes the radical-mediated insertion of two sulfur atoms into the C-6 and C-8 positions of the octanoyl moiety bound to the lipoyl domains of lipoate-dependent enzymes, thereby converting the octanoylated domains into lipoylated derivatives. This chain is Lipoyl synthase, found in Glaesserella parasuis serovar 5 (strain SH0165) (Haemophilus parasuis).